The following is a 240-amino-acid chain: Keratinocyte-associated protein 3 (240 aa).

4 consecutive transmembrane segments (helical) span residues Val-21–Gly-41, Val-63–Ser-83, Leu-95–Leu-115, and Ala-163–Tyr-183.

The protein belongs to the TMEM54 family.

The protein resides in the membrane. The polypeptide is Keratinocyte-associated protein 3 (Krtcap3) (Mus musculus (Mouse)).